Here is a 138-residue protein sequence, read N- to C-terminus: Small ribosomal subunit protein uS11 (138 aa).

Over residues 1–12 (MAPKKPGAAGPK) the composition is skewed to low complexity. Disordered stretches follow at residues 1–27 (MAPKKPGAAGPKKAQKTRRREKKNVPH) and 119–138 (ISDVTPQPHNGCRPPKRRRV). Positions 13 to 22 (KAQKTRRREK) are enriched in basic residues.

This sequence belongs to the universal ribosomal protein uS11 family. As to quaternary structure, part of the 30S ribosomal subunit. Interacts with proteins S7 and S18. Binds to IF-3.

Functionally, located on the platform of the 30S subunit, it bridges several disparate RNA helices of the 16S rRNA. Forms part of the Shine-Dalgarno cleft in the 70S ribosome. The chain is Small ribosomal subunit protein uS11 from Mycobacteroides abscessus (strain ATCC 19977 / DSM 44196 / CCUG 20993 / CIP 104536 / JCM 13569 / NCTC 13031 / TMC 1543 / L948) (Mycobacterium abscessus).